We begin with the raw amino-acid sequence, 307 residues long: Putative transcription factor bHLH086 (307 aa).

2 disordered regions span residues 1-49 and 167-215; these read MSLI…DHQN and HEST…QSLA. Polar residues-rich tracts occupy residues 12-28 and 183-197; these read NYIS…SPQN and GENT…SGTN. The basic motif stretch occupies residues 207 to 220; that stretch reads SPKDPQSLAAKNRR. Positions 207–256 constitute a bHLH domain; the sequence is SPKDPQSLAAKNRRERISERLKVLQELVPNGTKVDLVTMLEKAIGYVKFL. The tract at residues 221–256 is helix-loop-helix motif; the sequence is ERISERLKVLQELVPNGTKVDLVTMLEKAIGYVKFL.

In terms of assembly, homodimer. Forms heterodimers with RHD6. Interacts with TIFY10B/JAZ2, TIFY6A/JAZ4, TIFY5A/JAZ8, TIFY7/JAZ9 and TIFY9/JAZ10.

The protein localises to the nucleus. Its function is as follows. Transcription factor that is specifically required for the development of root hairs. Acts with RHD6 to positively regulate root hair development. Acts downstream of genes that regulate epidermal pattern formation, such as GL2. Acts with RHD6 as transcription factor that integrates a jasmonate (JA) signaling pathway that stimulates root hair growth. The chain is Putative transcription factor bHLH086 from Arabidopsis thaliana (Mouse-ear cress).